Here is a 199-residue protein sequence, read N- to C-terminus: Protein PPP1R35 homolog (199 aa).

The segment covering 1–11 (MPHKRRNRVHA) has biased composition (basic residues). Disordered stretches follow at residues 1 to 23 (MPHK…RVSV) and 36 to 60 (ESCN…AMTN). A compositionally biased stretch (polar residues) spans 38–49 (CNGSHADNSSPD).

It belongs to the PPP1R35 family. Interacts with Ana3; this complex is recruited to daughter centrioles before their conversion to centrosomes.

Its subcellular location is the cytoplasm. The protein localises to the cytoskeleton. The protein resides in the microtubule organizing center. It is found in the centrosome. It localises to the centriole. Functionally, participates in the later stages of centriole assembly through the interaction with Ana3 leading to the centriole to centrosome conversion in somatic cells. In Drosophila melanogaster (Fruit fly), this protein is Protein PPP1R35 homolog.